The primary structure comprises 335 residues: tRNA pseudouridine synthase D (335 aa).

The active-site Nucleophile is aspartate 77. One can recognise a TRUD domain in the interval 152–308 (GFPNYFTEQR…AQNLNWQFEP (157 aa)).

Belongs to the pseudouridine synthase TruD family.

The enzyme catalyses uridine(13) in tRNA = pseudouridine(13) in tRNA. Functionally, responsible for synthesis of pseudouridine from uracil-13 in transfer RNAs. In Actinobacillus succinogenes (strain ATCC 55618 / DSM 22257 / CCUG 43843 / 130Z), this protein is tRNA pseudouridine synthase D.